Reading from the N-terminus, the 291-residue chain is Protease HtpX homolog (291 aa).

The next 2 membrane-spanning stretches (helical) occupy residues 4–24 and 39–59; these read ILLFILTNVAVVAVLGIVASL and SALLGFALIMGFGGAIISLLI. His-144 contributes to the Zn(2+) binding site. Residue Glu-145 is part of the active site. His-148 lines the Zn(2+) pocket. 2 helical membrane-spanning segments follow: residues 159-179 and 199-219; these read LIQGVMNTFVVFLSRVIGYAV and VSTIVLDIVLGFAAAIVVAWF. Glu-224 lines the Zn(2+) pocket.

Belongs to the peptidase M48B family. Zn(2+) is required as a cofactor.

The protein resides in the cell inner membrane. This Polaromonas naphthalenivorans (strain CJ2) protein is Protease HtpX homolog.